The following is a 64-amino-acid chain: Alpha-conotoxin-like Lp1.7 (64 aa).

The first 21 residues, 1 to 21, serve as a signal peptide directing secretion; it reads MGMRMMFTMFLLVVLTTTVVS. Positions 22-41 are excised as a propeptide; that stretch reads FNSDRESNHENRRTSNQITR. 2 disulfide bridges follow: Cys-47/Cys-53 and Cys-48/Cys-61. Residues 49–51 form a lacks the Ser-Xaa-Pro motif that is crucial for potent interaction with nAChR region; that stretch reads DDP.

It belongs to the conotoxin A superfamily. As to expression, expressed by the venom duct.

The protein resides in the secreted. Functionally, alpha-conotoxins act on postsynaptic membranes, they bind to the nicotinic acetylcholine receptors (nAChR) and thus inhibit them. Has possibly a distinct nAChR binding mode from other alpha-conotoxins, due to a different three residue motif (lacks the Ser-Xaa-Pro motif). This chain is Alpha-conotoxin-like Lp1.7, found in Conus leopardus (Leopard cone).